A 476-amino-acid chain; its full sequence is Bifunctional protein HldE (476 aa).

The ribokinase stretch occupies residues 1-318 (MKPTLPNYDQ…AEAIHGSQDS (318 aa)). 195–198 (NMLE) lines the ATP pocket. The active site involves Asp-264. The tract at residues 344 to 476 (MTNGCFDILH…IIEAIKGGRG (133 aa)) is cytidylyltransferase.

It in the N-terminal section; belongs to the carbohydrate kinase PfkB family. This sequence in the C-terminal section; belongs to the cytidylyltransferase family. In terms of assembly, homodimer.

The catalysed reaction is D-glycero-beta-D-manno-heptose 7-phosphate + ATP = D-glycero-beta-D-manno-heptose 1,7-bisphosphate + ADP + H(+). The enzyme catalyses D-glycero-beta-D-manno-heptose 1-phosphate + ATP + H(+) = ADP-D-glycero-beta-D-manno-heptose + diphosphate. It functions in the pathway nucleotide-sugar biosynthesis; ADP-L-glycero-beta-D-manno-heptose biosynthesis; ADP-L-glycero-beta-D-manno-heptose from D-glycero-beta-D-manno-heptose 7-phosphate: step 1/4. It participates in nucleotide-sugar biosynthesis; ADP-L-glycero-beta-D-manno-heptose biosynthesis; ADP-L-glycero-beta-D-manno-heptose from D-glycero-beta-D-manno-heptose 7-phosphate: step 3/4. In terms of biological role, catalyzes the phosphorylation of D-glycero-D-manno-heptose 7-phosphate at the C-1 position to selectively form D-glycero-beta-D-manno-heptose-1,7-bisphosphate. Catalyzes the ADP transfer from ATP to D-glycero-beta-D-manno-heptose 1-phosphate, yielding ADP-D-glycero-beta-D-manno-heptose. This chain is Bifunctional protein HldE, found in Aliivibrio fischeri (strain MJ11) (Vibrio fischeri).